The sequence spans 199 residues: Pyridoxal 5'-phosphate synthase subunit PdxT (199 aa).

Residue 52–54 participates in L-glutamine binding; the sequence is GES. C84 (nucleophile) is an active-site residue. L-glutamine-binding positions include R115 and 143-144; that span reads IR. Active-site charge relay system residues include H179 and E181.

The protein belongs to the glutaminase PdxT/SNO family. As to quaternary structure, in the presence of PdxS, forms a dodecamer of heterodimers. Only shows activity in the heterodimer.

The enzyme catalyses aldehydo-D-ribose 5-phosphate + D-glyceraldehyde 3-phosphate + L-glutamine = pyridoxal 5'-phosphate + L-glutamate + phosphate + 3 H2O + H(+). It carries out the reaction L-glutamine + H2O = L-glutamate + NH4(+). It participates in cofactor biosynthesis; pyridoxal 5'-phosphate biosynthesis. Its function is as follows. Catalyzes the hydrolysis of glutamine to glutamate and ammonia as part of the biosynthesis of pyridoxal 5'-phosphate. The resulting ammonia molecule is channeled to the active site of PdxS. The sequence is that of Pyridoxal 5'-phosphate synthase subunit PdxT from Methanosarcina acetivorans (strain ATCC 35395 / DSM 2834 / JCM 12185 / C2A).